The chain runs to 177 residues: ATP synthase subunit delta (177 aa).

It belongs to the ATPase delta chain family. As to quaternary structure, F-type ATPases have 2 components, F(1) - the catalytic core - and F(0) - the membrane proton channel. F(1) has five subunits: alpha(3), beta(3), gamma(1), delta(1), epsilon(1). F(0) has three main subunits: a(1), b(2) and c(10-14). The alpha and beta chains form an alternating ring which encloses part of the gamma chain. F(1) is attached to F(0) by a central stalk formed by the gamma and epsilon chains, while a peripheral stalk is formed by the delta and b chains.

The protein resides in the cell inner membrane. Its function is as follows. F(1)F(0) ATP synthase produces ATP from ADP in the presence of a proton or sodium gradient. F-type ATPases consist of two structural domains, F(1) containing the extramembraneous catalytic core and F(0) containing the membrane proton channel, linked together by a central stalk and a peripheral stalk. During catalysis, ATP synthesis in the catalytic domain of F(1) is coupled via a rotary mechanism of the central stalk subunits to proton translocation. In terms of biological role, this protein is part of the stalk that links CF(0) to CF(1). It either transmits conformational changes from CF(0) to CF(1) or is implicated in proton conduction. The polypeptide is ATP synthase subunit delta (Neisseria meningitidis serogroup B (strain ATCC BAA-335 / MC58)).